A 1024-amino-acid chain; its full sequence is Beta-galactosidase (1024 aa).

Residues Asn103 and Asp202 each contribute to the substrate site. Asp202 contacts Na(+). Residues Glu417, His419, and Glu462 each coordinate Mg(2+). Residues Glu462 and 538–541 (EYAH) contribute to the substrate site. Glu462 acts as the Proton donor in catalysis. Catalysis depends on Glu538, which acts as the Nucleophile. Residue Asn598 participates in Mg(2+) binding. Na(+)-binding residues include Phe602 and Asn605. Residues Asn605 and Trp1000 each contribute to the substrate site.

It belongs to the glycosyl hydrolase 2 family. Homotetramer. Mg(2+) serves as cofactor. It depends on Mn(2+) as a cofactor. The cofactor is Na(+).

The enzyme catalyses Hydrolysis of terminal non-reducing beta-D-galactose residues in beta-D-galactosides.. Inhibited by phenylethyl thio-beta-D-galactoside (PETG), isopropyl thio-beta-D-galactoside (IPTG), L-ribose, D-galactonolactone, lactose and 2-amino-D-galactose. This is Beta-galactosidase (lacZ) from Escherichia coli (strain K12).